Here is a 123-residue protein sequence, read N- to C-terminus: UPF0212 protein rrnAC0441 (123 aa).

This sequence belongs to the UPF0212 family.

This is UPF0212 protein rrnAC0441 from Haloarcula marismortui (strain ATCC 43049 / DSM 3752 / JCM 8966 / VKM B-1809) (Halobacterium marismortui).